The following is a 147-amino-acid chain: ATP synthase epsilon chain (147 aa).

This sequence belongs to the ATPase epsilon chain family. In terms of assembly, F-type ATPases have 2 components, CF(1) - the catalytic core - and CF(0) - the membrane proton channel. CF(1) has five subunits: alpha(3), beta(3), gamma(1), delta(1), epsilon(1). CF(0) has three main subunits: a, b and c.

The protein resides in the cell inner membrane. Its function is as follows. Produces ATP from ADP in the presence of a proton gradient across the membrane. The chain is ATP synthase epsilon chain from Protochlamydia amoebophila (strain UWE25).